The primary structure comprises 631 residues: Glutamyl-tRNA(Gln) amidotransferase subunit E (631 aa).

It belongs to the GatB/GatE family. GatE subfamily. In terms of assembly, heterodimer of GatD and GatE.

It catalyses the reaction L-glutamyl-tRNA(Gln) + L-glutamine + ATP + H2O = L-glutaminyl-tRNA(Gln) + L-glutamate + ADP + phosphate + H(+). Its function is as follows. Allows the formation of correctly charged Gln-tRNA(Gln) through the transamidation of misacylated Glu-tRNA(Gln) in organisms which lack glutaminyl-tRNA synthetase. The reaction takes place in the presence of glutamine and ATP through an activated gamma-phospho-Glu-tRNA(Gln). The GatDE system is specific for glutamate and does not act on aspartate. The polypeptide is Glutamyl-tRNA(Gln) amidotransferase subunit E (Methanococcus maripaludis (strain C5 / ATCC BAA-1333)).